Here is an 874-residue protein sequence, read N- to C-terminus: Alanine--tRNA ligase (874 aa).

Residues His-562, His-566, Cys-665, and His-669 each coordinate Zn(2+).

It belongs to the class-II aminoacyl-tRNA synthetase family. The cofactor is Zn(2+).

The protein resides in the cytoplasm. The catalysed reaction is tRNA(Ala) + L-alanine + ATP = L-alanyl-tRNA(Ala) + AMP + diphosphate. Functionally, catalyzes the attachment of alanine to tRNA(Ala) in a two-step reaction: alanine is first activated by ATP to form Ala-AMP and then transferred to the acceptor end of tRNA(Ala). Also edits incorrectly charged Ser-tRNA(Ala) and Gly-tRNA(Ala) via its editing domain. This is Alanine--tRNA ligase from Pseudomonas syringae pv. syringae (strain B728a).